The sequence spans 509 residues: Angiopoietin-4 (509 aa).

The N-terminal stretch at 1–21 (MLCQPAMLLDGLLLLATMAAA) is a signal peptide. N105, N135, N149, N167, N256, N306, N317, and N417 each carry an N-linked (GlcNAc...) asparagine glycan. Residues 181–269 (LSTNKLERQM…LQQQQQQLTE (89 aa)) are a coiled coil. The Fibrinogen C-terminal domain occupies 288–508 (KTPKPVFQDC…GTRMMLRPMG (221 aa)). C297 and C326 are disulfide-bonded. Residues 416-436 (VNDSSSSAGRKNSLAPQGTKF) form a disordered region. C450 and C463 are joined by a disulfide.

As to quaternary structure, homodimer; disulfide-linked. Interacts with TEK/TIE2. As to expression, widely expressed.

Its subcellular location is the secreted. Functionally, binds to TEK/TIE2, modulating ANGPT1 signaling. Can induce tyrosine phosphorylation of TEK/TIE2. Promotes endothelial cell survival, migration and angiogenesis. The polypeptide is Angiopoietin-4 (Angpt4) (Mus musculus (Mouse)).